Consider the following 458-residue polypeptide: ATP synthase subunit beta (458 aa).

ATP is bound at residue Gly-148–Thr-155.

It belongs to the ATPase alpha/beta chains family. In terms of assembly, F-type ATPases have 2 components, CF(1) - the catalytic core - and CF(0) - the membrane proton channel. CF(1) has five subunits: alpha(3), beta(3), gamma(1), delta(1), epsilon(1). CF(0) has three main subunits: a(1), b(2) and c(9-12). The alpha and beta chains form an alternating ring which encloses part of the gamma chain. CF(1) is attached to CF(0) by a central stalk formed by the gamma and epsilon chains, while a peripheral stalk is formed by the delta and b chains.

The protein localises to the cell inner membrane. The enzyme catalyses ATP + H2O + 4 H(+)(in) = ADP + phosphate + 5 H(+)(out). In terms of biological role, produces ATP from ADP in the presence of a proton gradient across the membrane. The catalytic sites are hosted primarily by the beta subunits. This chain is ATP synthase subunit beta, found in Pseudomonas fluorescens (strain ATCC BAA-477 / NRRL B-23932 / Pf-5).